The sequence spans 166 residues: Phosphopantetheine adenylyltransferase (166 aa).

Substrate is bound at residue S8. ATP is bound by residues 8–9 (SF) and H16. Substrate contacts are provided by K40, T72, and R86. Residues 87–89 (GLR), E97, and 122–128 (YSFLSSS) each bind ATP.

It belongs to the bacterial CoaD family. In terms of assembly, homohexamer. It depends on Mg(2+) as a cofactor.

The protein resides in the cytoplasm. It carries out the reaction (R)-4'-phosphopantetheine + ATP + H(+) = 3'-dephospho-CoA + diphosphate. The protein operates within cofactor biosynthesis; coenzyme A biosynthesis; CoA from (R)-pantothenate: step 4/5. Its function is as follows. Reversibly transfers an adenylyl group from ATP to 4'-phosphopantetheine, yielding dephospho-CoA (dPCoA) and pyrophosphate. The polypeptide is Phosphopantetheine adenylyltransferase (Synechococcus elongatus (strain ATCC 33912 / PCC 7942 / FACHB-805) (Anacystis nidulans R2)).